A 356-amino-acid chain; its full sequence is DNA polymerase IV (356 aa).

Positions 7–188 constitute a UmuC domain; it reads IIHIDMDCFY…LPLKKIPGVG (182 aa). Mg(2+) is bound by residues aspartate 11 and aspartate 106. Glutamate 107 is an active-site residue.

The protein belongs to the DNA polymerase type-Y family. In terms of assembly, monomer. Mg(2+) serves as cofactor.

It localises to the cytoplasm. The catalysed reaction is DNA(n) + a 2'-deoxyribonucleoside 5'-triphosphate = DNA(n+1) + diphosphate. Functionally, poorly processive, error-prone DNA polymerase involved in untargeted mutagenesis. Copies undamaged DNA at stalled replication forks, which arise in vivo from mismatched or misaligned primer ends. These misaligned primers can be extended by PolIV. Exhibits no 3'-5' exonuclease (proofreading) activity. May be involved in translesional synthesis, in conjunction with the beta clamp from PolIII. This chain is DNA polymerase IV, found in Actinobacillus pleuropneumoniae serotype 3 (strain JL03).